We begin with the raw amino-acid sequence, 805 residues long: Leucine--tRNA ligase (805 aa).

The short motif at 41–52 (PYPSGAGLHVGH) is the 'HIGH' region element. The short motif at 577–581 (KMSKS) is the 'KMSKS' region element. An ATP-binding site is contributed by K580.

This sequence belongs to the class-I aminoacyl-tRNA synthetase family.

It localises to the cytoplasm. The enzyme catalyses tRNA(Leu) + L-leucine + ATP = L-leucyl-tRNA(Leu) + AMP + diphosphate. The chain is Leucine--tRNA ligase from Staphylococcus aureus (strain USA300).